The following is a 124-amino-acid chain: Nascent polypeptide-associated complex protein (124 aa).

The region spanning 7-74 is the NAC-A/B domain; sequence GLNPRKMKQM…PESRERGDSG (68 aa). The disordered stretch occupies residues 53–124; that stretch reads AQGQQTYQVV…DLAAAVQKLE (72 aa). The segment covering 74–93 has biased composition (acidic residues); the sequence is GSEDDSETESGGEFSEDDVE.

Belongs to the NAC-alpha family. Homodimer. Interacts with the ribosome. Binds ribosomal RNA.

Contacts the emerging nascent chain on the ribosome. This chain is Nascent polypeptide-associated complex protein, found in Natronomonas pharaonis (strain ATCC 35678 / DSM 2160 / CIP 103997 / JCM 8858 / NBRC 14720 / NCIMB 2260 / Gabara) (Halobacterium pharaonis).